The primary structure comprises 115 residues: MRIKVGETVAILAGKDRFVTDESGKKMIKTGKVLKVFAKTQKIIVEGVNIKTKHQPPSQNEEKGAIVKQEAPIHVSNVALVDPQTQTSTKVGIRIQSGKKVRYAKKSNQTLDEKN.

It belongs to the universal ribosomal protein uL24 family. In terms of assembly, part of the 50S ribosomal subunit.

One of two assembly initiator proteins, it binds directly to the 5'-end of the 23S rRNA, where it nucleates assembly of the 50S subunit. Its function is as follows. One of the proteins that surrounds the polypeptide exit tunnel on the outside of the subunit. This is Large ribosomal subunit protein uL24 from Aster yellows witches'-broom phytoplasma (strain AYWB).